The primary structure comprises 312 residues: Ribosomal protein L11 methyltransferase (312 aa).

The S-adenosyl-L-methionine site is built by threonine 160, glycine 181, aspartate 203, and asparagine 246.

The protein belongs to the methyltransferase superfamily. PrmA family.

It is found in the cytoplasm. It carries out the reaction L-lysyl-[protein] + 3 S-adenosyl-L-methionine = N(6),N(6),N(6)-trimethyl-L-lysyl-[protein] + 3 S-adenosyl-L-homocysteine + 3 H(+). In terms of biological role, methylates ribosomal protein L11. This Staphylococcus saprophyticus subsp. saprophyticus (strain ATCC 15305 / DSM 20229 / NCIMB 8711 / NCTC 7292 / S-41) protein is Ribosomal protein L11 methyltransferase.